Reading from the N-terminus, the 76-residue chain is UPF0291 protein GK1331 (76 aa).

The disordered stretch occupies residues 57–76 (PSGNDVTPKKLKESQRRRFH). Residues 63 to 76 (TPKKLKESQRRRFH) show a composition bias toward basic and acidic residues.

Belongs to the UPF0291 family.

It is found in the cytoplasm. The polypeptide is UPF0291 protein GK1331 (Geobacillus kaustophilus (strain HTA426)).